A 360-amino-acid chain; its full sequence is Phosphoserine aminotransferase (360 aa).

R42 serves as a coordination point for L-glutamate. Positions 102, 152, 171, and 194 each coordinate pyridoxal 5'-phosphate. An N6-(pyridoxal phosphate)lysine modification is found at K195. A pyridoxal 5'-phosphate-binding site is contributed by 237-238 (NT).

This sequence belongs to the class-V pyridoxal-phosphate-dependent aminotransferase family. SerC subfamily. Homodimer. Pyridoxal 5'-phosphate serves as cofactor.

Its subcellular location is the cytoplasm. The enzyme catalyses O-phospho-L-serine + 2-oxoglutarate = 3-phosphooxypyruvate + L-glutamate. The catalysed reaction is 4-(phosphooxy)-L-threonine + 2-oxoglutarate = (R)-3-hydroxy-2-oxo-4-phosphooxybutanoate + L-glutamate. The protein operates within amino-acid biosynthesis; L-serine biosynthesis; L-serine from 3-phospho-D-glycerate: step 2/3. It participates in cofactor biosynthesis; pyridoxine 5'-phosphate biosynthesis; pyridoxine 5'-phosphate from D-erythrose 4-phosphate: step 3/5. Functionally, catalyzes the reversible conversion of 3-phosphohydroxypyruvate to phosphoserine and of 3-hydroxy-2-oxo-4-phosphonooxybutanoate to phosphohydroxythreonine. The sequence is that of Phosphoserine aminotransferase from Coxiella burnetii (strain CbuK_Q154) (Coxiella burnetii (strain Q154)).